The primary structure comprises 340 residues: Glycerol-3-phosphate dehydrogenase [NAD(P)+] (340 aa).

Residues serine 14, tyrosine 15, histidine 35, and lysine 109 each coordinate NADPH. Residues lysine 109, glycine 138, and threonine 140 each coordinate sn-glycerol 3-phosphate. Alanine 142 contacts NADPH. 5 residues coordinate sn-glycerol 3-phosphate: lysine 194, aspartate 247, serine 257, arginine 258, and asparagine 259. Lysine 194 (proton acceptor) is an active-site residue. Residue arginine 258 coordinates NADPH. Positions 282 and 284 each coordinate NADPH.

Belongs to the NAD-dependent glycerol-3-phosphate dehydrogenase family.

The protein resides in the cytoplasm. The catalysed reaction is sn-glycerol 3-phosphate + NAD(+) = dihydroxyacetone phosphate + NADH + H(+). It carries out the reaction sn-glycerol 3-phosphate + NADP(+) = dihydroxyacetone phosphate + NADPH + H(+). It participates in membrane lipid metabolism; glycerophospholipid metabolism. Catalyzes the reduction of the glycolytic intermediate dihydroxyacetone phosphate (DHAP) to sn-glycerol 3-phosphate (G3P), the key precursor for phospholipid synthesis. The protein is Glycerol-3-phosphate dehydrogenase [NAD(P)+] of Photorhabdus laumondii subsp. laumondii (strain DSM 15139 / CIP 105565 / TT01) (Photorhabdus luminescens subsp. laumondii).